The following is a 79-amino-acid chain: Small ribosomal subunit protein bS21 (79 aa).

Composition is skewed to basic residues over residues 47–59 (RKQA…HLKK) and 69–79 (GVGHRRKKSTT). Positions 47–79 (RKQAAAVKRHLKKISRDVSSRRGVGHRRKKSTT) are disordered.

This sequence belongs to the bacterial ribosomal protein bS21 family.

This chain is Small ribosomal subunit protein bS21, found in Legionella pneumophila (strain Paris).